A 343-amino-acid polypeptide reads, in one-letter code: Trace amine-associated receptor 3 (343 aa).

Topologically, residues 1 to 35 (MDLIYIPEDLSSCPKFGNKSCPPTNRSFRVRMIMY) are extracellular. N-linked (GlcNAc...) asparagine glycans are attached at residues Asn18 and Asn25. Intrachain disulfides connect Cys21/Cys185 and Cys104/Cys189. The chain crosses the membrane as a helical span at residues 36-56 (LFMTGAMVITIFGNLVIIISI). The Cytoplasmic segment spans residues 57–68 (SHFKQLHSPTNF). Residues 69–89 (LILSMATTDFLLGFVIMPYSM) form a helical membrane-spanning segment. Over 90-150 (VRSVESCWYF…TTMTVSMIKR (61 aa)) the chain is Extracellular. A helical transmembrane segment spans residues 151–168 (LLAFCWAAPALFSFGLVL). Over 169–172 (SEAN) the chain is Cytoplasmic. The tract at residues 173-186 (VSGMQSYEILVACF) is extracellular Loop 2 (ECL2). A helical transmembrane segment spans residues 173–193 (VSGMQSYEILVACFNFCALTF). Residues 194–198 (NKFWG) lie on the Extracellular side of the membrane. Residues 199–223 (TILFTTCFFTPGSIMVGIYGKIFIV) traverse the membrane as a helical segment. The Cytoplasmic segment spans residues 224-257 (SRRHARALSDMPANTKGAVGKNLSKKKDRKAAKT). Residues 258–278 (LGIVMGVFLACWLPCFLAVLI) form a helical membrane-spanning segment. The Extracellular segment spans residues 279 to 287 (DPYLDYSTP). Residues 288–308 (IIVLDLLVWLGYFNSTCNPLI) traverse the membrane as a helical segment. At 309–343 (HGFFYPWFRKALQFIVSGKIFRSNSDTANLFPEAH) the chain is on the cytoplasmic side.

It belongs to the G-protein coupled receptor 1 family. As to expression, specifically expressed in neurons of the olfactory epithelium.

The protein localises to the cell membrane. Its function is as follows. Olfactory receptor activated by several primary trace amines, including isoamylamine. Activated by isoamylamine and cyclohexylamine, but not to the corresponding alcohols, isoamylalcohol and cyclohexanol. This receptor is probably mediated by the G(s)-class of G-proteins which activate adenylate cyclase. The sequence is that of Trace amine-associated receptor 3 from Mus musculus (Mouse).